The sequence spans 153 residues: MPQPTRPYSFMELCREYTLEQLLKFLNVTLDTLMLPCHFCSSFMDLNNKASYLASQLKVIVKDCCFKGACIKCRRKLAFAERQKYQVCVGEADLVEAMVGSHVINLTVRCSECLALLTASEKLDAKCELQTFILVRHMWRTSCRACRTPAIEC.

Zinc fingers lie at residues 37–73 and 110–146; these read CHFCSSFMDLNNKASYLASQLKVIVKDCCFKGACIKC and CSECLALLTASEKLDAKCELQTFILVRHMWRTSCRAC.

It belongs to the papillomaviridae E6 protein family. As to quaternary structure, forms homodimers. Interacts with ubiquitin-protein ligase UBE3A/E6-AP; this interaction stimulates UBE3A ubiquitin activity. Interacts with host BAK1.

It is found in the host cytoplasm. The protein resides in the host nucleus. Plays a major role in the induction and maintenance of cellular transformation. E6 associates with host UBE3A/E6-AP ubiquitin-protein ligase and modulates its activity. Protects host keratinocytes from apoptosis by mediating the degradation of host BAK1. May also inhibit host immune response. In Micromys minutus papillomavirus (MmPV), this protein is Protein E6.